The following is a 324-amino-acid chain: Acetyl-coenzyme A carboxylase carboxyl transferase subunit alpha (324 aa).

The CoA carboxyltransferase C-terminal domain occupies 37–291; the sequence is KLEKRLDKLK…REFIIQEWLR (255 aa).

Belongs to the AccA family. In terms of assembly, acetyl-CoA carboxylase is a heterohexamer composed of biotin carboxyl carrier protein (AccB), biotin carboxylase (AccC) and two subunits each of ACCase subunit alpha (AccA) and ACCase subunit beta (AccD).

It is found in the cytoplasm. The enzyme catalyses N(6)-carboxybiotinyl-L-lysyl-[protein] + acetyl-CoA = N(6)-biotinyl-L-lysyl-[protein] + malonyl-CoA. Its pathway is lipid metabolism; malonyl-CoA biosynthesis; malonyl-CoA from acetyl-CoA: step 1/1. In terms of biological role, component of the acetyl coenzyme A carboxylase (ACC) complex. First, biotin carboxylase catalyzes the carboxylation of biotin on its carrier protein (BCCP) and then the CO(2) group is transferred by the carboxyltransferase to acetyl-CoA to form malonyl-CoA. This Chlamydia pneumoniae (Chlamydophila pneumoniae) protein is Acetyl-coenzyme A carboxylase carboxyl transferase subunit alpha.